A 316-amino-acid chain; its full sequence is Short-chain dehydrogenase/reductase family 16C member 6 (316 aa).

Position 40–64 (40–64 (LITGAASGLGRLLAIKFASLGAILV)) interacts with NAD(+). Serine 173 lines the substrate pocket. The active-site Proton acceptor is tyrosine 186.

It belongs to the short-chain dehydrogenases/reductases (SDR) family.

In Bos taurus (Bovine), this protein is Short-chain dehydrogenase/reductase family 16C member 6 (SDR16C6).